The primary structure comprises 662 residues: Probable quinol oxidase subunit 1 (662 aa).

Helical transmembrane passes span 14–34 (WMITMAQIGAPFLVIGLIAVI) and 58–78 (IMYLICAVLMFVRGGIDALLI). H102 provides a ligand contact to Fe(II)-heme a. Transmembrane regions (helical) follow at residues 103 to 123 (GVIMIIFMAMPFIFGLWNIVV), 140 to 160 (VSFWLFFAGMILFNLSFIIGG), 187 to 207 (IAIQISGLGTLATGINFFVTI), 228 to 248 (FITTLIVILAFPPLTVALALM), 273 to 293 (FFWVWGHPEVYIVILPAFGIY), 311 to 331 (MVWATAGIAFLSFLVWVHHFF), 336 to 356 (GALINSFFSISTMLIGIPTGV), and 376 to 396 (MLFSLAFIPNFLLGGVTGVML). The Cu cation site is built by H279, Y283, H328, and H329. Positions 279 to 283 (HPEVY) form a cross-link, 1'-histidyl-3'-tyrosine (His-Tyr). H414 serves as a coordination point for heme a3. A run of 5 helical transmembrane segments spans residues 415–435 (FHYTLVTGVVFACLAGLIFWY), 451–471 (CFWFFMIGFNVCFLPQFILGL), 493–513 (ISTIGALLMAIGFLFLVVSIV), 587–604 (PVGFWIGIFMTIGGFFLI), and 608–627 (VIPALICLFGIFGTMIYRSF). H416 is a binding site for Fe(II)-heme a.

This sequence belongs to the heme-copper respiratory oxidase family. Cu cation serves as cofactor. It depends on ferriheme a as a cofactor. Requires Heme A3. as cofactor.

Its subcellular location is the cell membrane. It catalyses the reaction 2 a quinol + O2 = 2 a quinone + 2 H2O. The protein operates within energy metabolism; oxidative phosphorylation. Its function is as follows. Catalyzes quinol oxidation with the concomitant reduction of oxygen to water. The protein is Probable quinol oxidase subunit 1 (qoxB) of Staphylococcus aureus (strain MRSA252).